Reading from the N-terminus, the 1081-residue chain is Zinc finger protein 827 (1081 aa).

The span at 1-10 shows a compositional bias: basic and acidic residues; that stretch reads MPRRKQEQPK. Positions 1–14 are mediates direct interaction with RBBP4; that stretch reads MPRRKQEQPKRLPS. The tract at residues 1 to 77 is disordered; sequence MPRRKQEQPK…DTSLGSTTPS (77 aa). The RRK motif; mediates NuRD recruitment to telomeres motif lies at 3-5; that stretch reads RRK. Polar residues predominate over residues 62 to 77; it reads EQSTSPDTSLGSTTPS. Residues lysine 176, lysine 216, and lysine 226 each participate in a glycyl lysine isopeptide (Lys-Gly) (interchain with G-Cter in SUMO2) cross-link. Disordered regions lie at residues 258–280 and 305–348; these read KKVSERSLTPGQEHPPPASSFLS and EKSS…SLEL. Residues 327 to 344 are compositionally biased toward pro residues; that stretch reads VSPPPPPPPPPPPPPPPQ. Glycyl lysine isopeptide (Lys-Gly) (interchain with G-Cter in SUMO2) cross-links involve residues lysine 360 and lysine 372. 3 consecutive C2H2-type zinc fingers follow at residues 374-396, 402-424, and 433-455; these read FQCPICGLVIKRKSYWKRHMVIH, HQCPLCPFRCARKDNLKSHMKVH, and FQCQLCPFTSSRHFSLKLHMRCH. Glycyl lysine isopeptide (Lys-Gly) (interchain with G-Cter in SUMO2) cross-links involve residues lysine 466, lysine 475, lysine 523, lysine 549, lysine 580, lysine 587, and lysine 597. The interval 525–553 is disordered; sequence EPKEDNGLPTSFTLNTADRPANHTKLKDP. The segment covering 616–627 has biased composition (polar residues); it reads VFSPESEVSTPG. Positions 616-640 are disordered; that stretch reads VFSPESEVSTPGVSEDALKPQEGKG. Basic and acidic residues predominate over residues 631–640; the sequence is DALKPQEGKG. Residues lysine 634, lysine 639, and lysine 658 each participate in a glycyl lysine isopeptide (Lys-Gly) (interchain with G-Cter in SUMO2) cross-link. Lysine 673 participates in a covalent cross-link: Glycyl lysine isopeptide (Lys-Gly) (interchain with G-Cter in SUMO1); alternate. Residue lysine 673 forms a Glycyl lysine isopeptide (Lys-Gly) (interchain with G-Cter in SUMO2); alternate linkage. Glycyl lysine isopeptide (Lys-Gly) (interchain with G-Cter in SUMO2) cross-links involve residues lysine 704, lysine 710, lysine 742, lysine 778, and lysine 798. C2H2-type zinc fingers lie at residues 817-839 and 845-867; these read FPCDVCGKVFGRQQTLSRHLSLH and YKCHLCPYAAKCRANLNQHLTVH. Residues lysine 870 and lysine 891 each participate in a glycyl lysine isopeptide (Lys-Gly) (interchain with G-Cter in SUMO2) cross-link. 2 consecutive C2H2-type zinc fingers follow at residues 897-919 and 929-952; these read YSCHVCGFETELNVQFVSHMSLH and ICCTACDFVTMEEAEIKTHIGTKH. Basic and acidic residues predominate over residues 947-960; the sequence is HIGTKHTGEDRKTP. The segment at 947–1013 is disordered; that stretch reads HIGTKHTGED…GSQPSLNSEE (67 aa). Residue lysine 958 forms a Glycyl lysine isopeptide (Lys-Gly) (interchain with G-Cter in SUMO2) linkage. The segment covering 961-978 has biased composition (low complexity); that stretch reads SESNSPSSSSLSALSDSA. The span at 979-988 shows a compositional bias: basic and acidic residues; the sequence is NSKDDSDGSQ. Lysine 1014 participates in a covalent cross-link: Glycyl lysine isopeptide (Lys-Gly) (interchain with G-Cter in SUMO2). C2H2-type zinc fingers lie at residues 1019 to 1041 and 1047 to 1069; these read FECVFCNFVCKTKNMFERHLQIH and FECDVCHKFMKTPEQLLEHKKCH.

This sequence belongs to the krueppel C2H2-type zinc-finger protein family. In terms of assembly, part of a transcription inhibitory ribonucleoprotein complex composed at least of the circular RNA circZNF827, HNRNPK and HNRNPL. Interacts with the nucleosome remodeling and histone deacetylase/NuRD complex. Interacts with RBBP4; the interaction is direct and recruits RBBP4, a component of the NuRD complex, to telomeres.

Its subcellular location is the nucleus. It is found in the chromosome. The protein resides in the telomere. Functionally, as part of a ribonucleoprotein complex composed at least of HNRNPK, HNRNPL and the circular RNA circZNF827 that nucleates the complex on chromatin, may negatively regulate the transcription of genes involved in neuronal differentiation. Could also recruit the nucleosome remodeling and histone deacetylase/NuRD complex to telomeric regions of chromosomes to regulate chromatin remodeling as part of telomere maintenance. The protein is Zinc finger protein 827 (ZNF827) of Macaca fascicularis (Crab-eating macaque).